Reading from the N-terminus, the 1479-residue chain is DNA-directed RNA polymerase subunit beta'' (1479 aa).

The Zn(2+) site is built by cysteine 220, cysteine 296, cysteine 303, and cysteine 306. Disordered regions lie at residues 618–640 (TRAE…REDE) and 663–756 (LEDE…KKEG). Composition is skewed to acidic residues over residues 622 to 631 (DSEEEYETLE), 704 to 717 (DEYG…EDEY), and 731 to 749 (LEED…PEED).

It belongs to the RNA polymerase beta' chain family. RpoC2 subfamily. As to quaternary structure, in plastids the minimal PEP RNA polymerase catalytic core is composed of four subunits: alpha, beta, beta', and beta''. When a (nuclear-encoded) sigma factor is associated with the core the holoenzyme is formed, which can initiate transcription. Zn(2+) is required as a cofactor.

The protein localises to the plastid. The protein resides in the chloroplast. The catalysed reaction is RNA(n) + a ribonucleoside 5'-triphosphate = RNA(n+1) + diphosphate. DNA-dependent RNA polymerase catalyzes the transcription of DNA into RNA using the four ribonucleoside triphosphates as substrates. This Triticum aestivum (Wheat) protein is DNA-directed RNA polymerase subunit beta''.